The chain runs to 271 residues: Imidazole glycerol phosphate synthase subunit HisF (271 aa).

Residues D12 and D136 contribute to the active site.

The protein belongs to the HisA/HisF family. As to quaternary structure, heterodimer of HisH and HisF.

It is found in the cytoplasm. It catalyses the reaction 5-[(5-phospho-1-deoxy-D-ribulos-1-ylimino)methylamino]-1-(5-phospho-beta-D-ribosyl)imidazole-4-carboxamide + L-glutamine = D-erythro-1-(imidazol-4-yl)glycerol 3-phosphate + 5-amino-1-(5-phospho-beta-D-ribosyl)imidazole-4-carboxamide + L-glutamate + H(+). It functions in the pathway amino-acid biosynthesis; L-histidine biosynthesis; L-histidine from 5-phospho-alpha-D-ribose 1-diphosphate: step 5/9. Its function is as follows. IGPS catalyzes the conversion of PRFAR and glutamine to IGP, AICAR and glutamate. The HisF subunit catalyzes the cyclization activity that produces IGP and AICAR from PRFAR using the ammonia provided by the HisH subunit. In Natronomonas pharaonis (strain ATCC 35678 / DSM 2160 / CIP 103997 / JCM 8858 / NBRC 14720 / NCIMB 2260 / Gabara) (Halobacterium pharaonis), this protein is Imidazole glycerol phosphate synthase subunit HisF.